We begin with the raw amino-acid sequence, 159 residues long: MAGTIEVLVPGGKANPGPPLGPELGPTPVDVQDVVNDINDQTAAFDGMEVPVTVEYDDDGSFSIEVGVPPTAALIKDEVGFDTGSGEPQENFVADMSIEQLKKVAEQKSSDLLSYDLKNASKEVAGTCASLGVTIEGEDARTFKQRIDGGDFDDYFDDE.

The interval 1 to 26 (MAGTIEVLVPGGKANPGPPLGPELGP) is disordered.

This sequence belongs to the universal ribosomal protein uL11 family. In terms of assembly, part of the ribosomal stalk of the 50S ribosomal subunit. Interacts with L10 and the large rRNA to form the base of the stalk. L10 forms an elongated spine to which L12 dimers bind in a sequential fashion forming a multimeric L10(L12)X complex.

In terms of biological role, forms part of the ribosomal stalk which helps the ribosome interact with GTP-bound translation factors. In Haloferax volcanii (strain ATCC 29605 / DSM 3757 / JCM 8879 / NBRC 14742 / NCIMB 2012 / VKM B-1768 / DS2) (Halobacterium volcanii), this protein is Large ribosomal subunit protein uL11.